The following is a 138-amino-acid chain: ATP synthase epsilon chain (138 aa).

The protein belongs to the ATPase epsilon chain family. F-type ATPases have 2 components, CF(1) - the catalytic core - and CF(0) - the membrane proton channel. CF(1) has five subunits: alpha(3), beta(3), gamma(1), delta(1), epsilon(1). CF(0) has three main subunits: a, b and c.

Its subcellular location is the cell inner membrane. Its function is as follows. Produces ATP from ADP in the presence of a proton gradient across the membrane. The polypeptide is ATP synthase epsilon chain (Trichlorobacter lovleyi (strain ATCC BAA-1151 / DSM 17278 / SZ) (Geobacter lovleyi)).